A 294-amino-acid chain; its full sequence is 4-hydroxy-tetrahydrodipicolinate synthase (294 aa).

T44 is a pyruvate binding site. Y132 acts as the Proton donor/acceptor in catalysis. K161 serves as the catalytic Schiff-base intermediate with substrate. I206 serves as a coordination point for pyruvate.

The protein belongs to the DapA family. In terms of assembly, homotetramer; dimer of dimers.

The protein resides in the cytoplasm. The catalysed reaction is L-aspartate 4-semialdehyde + pyruvate = (2S,4S)-4-hydroxy-2,3,4,5-tetrahydrodipicolinate + H2O + H(+). It participates in amino-acid biosynthesis; L-lysine biosynthesis via DAP pathway; (S)-tetrahydrodipicolinate from L-aspartate: step 3/4. With respect to regulation, is not inhibited by (S)-lysine, in contrast to E.coli DapA. In terms of biological role, catalyzes the condensation of (S)-aspartate-beta-semialdehyde [(S)-ASA] and pyruvate to 4-hydroxy-tetrahydrodipicolinate (HTPA). The sequence is that of 4-hydroxy-tetrahydrodipicolinate synthase from Thermotoga maritima (strain ATCC 43589 / DSM 3109 / JCM 10099 / NBRC 100826 / MSB8).